Reading from the N-terminus, the 255-residue chain is Type III pantothenate kinase (255 aa).

Position 6 to 13 (6 to 13 (DVGNTNTV)) interacts with ATP. Residues Y100 and 107-110 (GADR) each bind substrate. D109 (proton acceptor) is an active-site residue. D129 lines the K(+) pocket. T132 contributes to the ATP binding site. Residue T184 participates in substrate binding.

Belongs to the type III pantothenate kinase family. Homodimer. NH4(+) serves as cofactor. The cofactor is K(+).

Its subcellular location is the cytoplasm. It carries out the reaction (R)-pantothenate + ATP = (R)-4'-phosphopantothenate + ADP + H(+). It functions in the pathway cofactor biosynthesis; coenzyme A biosynthesis; CoA from (R)-pantothenate: step 1/5. Catalyzes the phosphorylation of pantothenate (Pan), the first step in CoA biosynthesis. This Syntrophotalea carbinolica (strain DSM 2380 / NBRC 103641 / GraBd1) (Pelobacter carbinolicus) protein is Type III pantothenate kinase.